The following is a 131-amino-acid chain: Holo-[acyl-carrier-protein] synthase (131 aa).

Mg(2+) is bound by residues D9 and E58.

Belongs to the P-Pant transferase superfamily. AcpS family. It depends on Mg(2+) as a cofactor.

Its subcellular location is the cytoplasm. The catalysed reaction is apo-[ACP] + CoA = holo-[ACP] + adenosine 3',5'-bisphosphate + H(+). Transfers the 4'-phosphopantetheine moiety from coenzyme A to a Ser of acyl-carrier-protein. The polypeptide is Holo-[acyl-carrier-protein] synthase (Salmonella arizonae (strain ATCC BAA-731 / CDC346-86 / RSK2980)).